A 203-amino-acid polypeptide reads, in one-letter code: Imidazoleglycerol-phosphate dehydratase (203 aa).

It belongs to the imidazoleglycerol-phosphate dehydratase family.

The protein localises to the cytoplasm. The enzyme catalyses D-erythro-1-(imidazol-4-yl)glycerol 3-phosphate = 3-(imidazol-4-yl)-2-oxopropyl phosphate + H2O. The protein operates within amino-acid biosynthesis; L-histidine biosynthesis; L-histidine from 5-phospho-alpha-D-ribose 1-diphosphate: step 6/9. The chain is Imidazoleglycerol-phosphate dehydratase from Helicobacter hepaticus (strain ATCC 51449 / 3B1).